A 151-amino-acid polypeptide reads, in one-letter code: MVWLGIDLGDARVGLALSDPELTLAHPIGNIQVYGDSFRALDEVIDVIGDESVDHVVIGLPLLLNGEEGKSAKKARRWSVNLEKRLHAAVEDESYSVTRVPTIELVDERLTTVTAHHQLFDARIGGRKHRPMVDQQSAVVILQTALDRSRE.

The protein belongs to the YqgF nuclease family.

It is found in the cytoplasm. Its function is as follows. Could be a nuclease involved in processing of the 5'-end of pre-16S rRNA. This chain is Putative pre-16S rRNA nuclease, found in Bifidobacterium adolescentis (strain ATCC 15703 / DSM 20083 / NCTC 11814 / E194a).